A 251-amino-acid polypeptide reads, in one-letter code: Ubiquitin-conjugating enzyme E2 6 (251 aa).

The Cytoplasmic segment spans residues 1-229; sequence MASIQANKRL…DQDKNPGENS (229 aa). Positions 5–154 constitute a UBC core domain; sequence QANKRLTKEY…YSNFKFKNMF (150 aa). Cysteine 87 functions as the Glycyl thioester intermediate in the catalytic mechanism. The segment covering 173 to 185 has biased composition (basic and acidic residues); it reads AESKGAQQEENKA. Positions 173 to 200 are disordered; it reads AESKGAQQEENKAQKLATEKATSLDDIS. The helical transmembrane segment at 230–250 threads the bilayer; the sequence is NIKSLLCLILAIAIFFVGLIM.

It belongs to the ubiquitin-conjugating enzyme family.

Its subcellular location is the endoplasmic reticulum membrane. The catalysed reaction is S-ubiquitinyl-[E1 ubiquitin-activating enzyme]-L-cysteine + [E2 ubiquitin-conjugating enzyme]-L-cysteine = [E1 ubiquitin-activating enzyme]-L-cysteine + S-ubiquitinyl-[E2 ubiquitin-conjugating enzyme]-L-cysteine.. The protein operates within protein modification; protein ubiquitination. Catalyzes the covalent attachment of ubiquitin to other proteins. Functions in degradation of misfolded or regulated proteins localized in the endoplasmic reticulum (ER) lumen or membrane via the ubiquitin-proteasome system. Cognate E2 conjugating enzyme for the DOA10 ubiquitin ligase complex, which is part of the ERAD-C pathway responsible for the rapid degradation of membrane proteins with misfolded cytoplasmic domains. The chain is Ubiquitin-conjugating enzyme E2 6 (UBC6) from Kluyveromyces lactis (strain ATCC 8585 / CBS 2359 / DSM 70799 / NBRC 1267 / NRRL Y-1140 / WM37) (Yeast).